Consider the following 123-residue polypeptide: Small ribosomal subunit protein uS13 (123 aa).

This sequence belongs to the universal ribosomal protein uS13 family. As to quaternary structure, part of the 30S ribosomal subunit. Forms a loose heterodimer with protein S19. Forms two bridges to the 50S subunit in the 70S ribosome.

Functionally, located at the top of the head of the 30S subunit, it contacts several helices of the 16S rRNA. In the 70S ribosome it contacts the 23S rRNA (bridge B1a) and protein L5 of the 50S subunit (bridge B1b), connecting the 2 subunits; these bridges are implicated in subunit movement. Contacts the tRNAs in the A and P-sites. This Anaplasma marginale (strain St. Maries) protein is Small ribosomal subunit protein uS13.